Consider the following 245-residue polypeptide: MKTTKKIAVITGANRGLGKGIAEELSNTNNITVIGTSTSQKGCKIINKYLKNNGIGIKLDITNPNEITKTMDFVYKNFGRVDILINNAGIIRDKLLINMKTQDWNSVLNVNLNSIFYMSKSVIRNMIKNKQGKIITIGSVIAHIGNCGQTNYSAAKLGLVGFHKSLALELAPKGITVNMIAPGLIKTGMTNNLSQKQLSKYLSKIPMKRLGTIKEISKITLFLISNDANYITGQVIHVNGGMYMP.

Residues 12 to 15 and Thr38 contribute to the NADP(+) site; that span reads GANR. The Ca(2+) site is built by Lys51 and Gly54. NADP(+) contacts are provided by residues 60–61 and Asn87; that span reads DI. Ser139 provides a ligand contact to substrate. Asn146 serves as a coordination point for Ca(2+). Tyr152 (proton acceptor) is an active-site residue. Residues 152 to 156 and Ile185 contribute to the NADP(+) site; that span reads YSAAK. Positions 234 and 235 each coordinate Ca(2+).

Belongs to the short-chain dehydrogenases/reductases (SDR) family. As to quaternary structure, homotetramer.

The enzyme catalyses a (3R)-hydroxyacyl-[ACP] + NADP(+) = a 3-oxoacyl-[ACP] + NADPH + H(+). The protein operates within lipid metabolism; fatty acid biosynthesis. Catalyzes the NADPH-dependent reduction of beta-ketoacyl-ACP substrates to beta-hydroxyacyl-ACP products, the first reductive step in the elongation cycle of fatty acid biosynthesis. The protein is 3-oxoacyl-[acyl-carrier-protein] reductase FabG (fabG) of Buchnera aphidicola subsp. Baizongia pistaciae (strain Bp).